The chain runs to 104 residues: Zinc finger C2H2 protein ECU02_0310 (104 aa).

The segment at 56–80 (FYCCECDRHFITEKVLMEHKRSNPH) adopts a C2H2-type zinc-finger fold.

Belongs to the ZNF593/BUD20 C2H2-type zinc-finger protein family. Associates with pre-60S ribosomal particles; released from the pre-60S particle very early in the cytoplasm.

It localises to the nucleus. The protein localises to the cytoplasm. Functionally, involved in pre-60S ribosomal particles maturation by promoting the nuclear export of the 60S ribosome. The polypeptide is Zinc finger C2H2 protein ECU02_0310 (Encephalitozoon cuniculi (strain GB-M1) (Microsporidian parasite)).